The sequence spans 149 residues: MSDNGFLFRFKDGQTYMDTWPERKELAPMFPEQRVIKATKFAVKVMPAVAVISVLTQMVFNNSAALPQSIIIALFAISMPLQGFWWLGNRANTKLPPALVNWYRELYQKIIESGAALEPLKQRPRYKDLANILNKAFKQLDKTALERWF.

Transmembrane regions (helical) follow at residues Phe-41–Asn-61 and Ser-69–Asn-89.

This sequence belongs to the UPF0208 family.

The protein localises to the cell inner membrane. This chain is UPF0208 membrane protein VSAL_I2111, found in Aliivibrio salmonicida (strain LFI1238) (Vibrio salmonicida (strain LFI1238)).